A 223-amino-acid polypeptide reads, in one-letter code: Adenylate kinase (223 aa).

Residue 10 to 15 (GSGKGT) coordinates ATP. The NMP stretch occupies residues 30–59 (ESGAIFREHIGGGTELGKQAKAFIERGDLV). Residues Ser31, Arg36, 57 to 59 (DLV), 84 to 87 (GFPR), and Gln91 contribute to the AMP site. The interval 125–164 (GRRLCKNDNNHPNNIFIDAIKPNGDVCRVCGGELSARSDD) is LID. An ATP-binding site is contributed by Arg126. Residues Arg161 and Arg173 each contribute to the AMP site. Gly209 serves as a coordination point for ATP.

This sequence belongs to the adenylate kinase family. As to quaternary structure, monomer.

The protein resides in the cytoplasm. The enzyme catalyses AMP + ATP = 2 ADP. It participates in purine metabolism; AMP biosynthesis via salvage pathway; AMP from ADP: step 1/1. Its function is as follows. Catalyzes the reversible transfer of the terminal phosphate group between ATP and AMP. Plays an important role in cellular energy homeostasis and in adenine nucleotide metabolism. This is Adenylate kinase from Nitratidesulfovibrio vulgaris (strain ATCC 29579 / DSM 644 / CCUG 34227 / NCIMB 8303 / VKM B-1760 / Hildenborough) (Desulfovibrio vulgaris).